The primary structure comprises 429 residues: Enolase (429 aa).

Gln162 contributes to the (2R)-2-phosphoglycerate binding site. The active-site Proton donor is the Glu204. Mg(2+)-binding residues include Asp241, Glu283, and Asp310. Lys335, Arg364, Ser365, and Lys386 together coordinate (2R)-2-phosphoglycerate. The active-site Proton acceptor is Lys335.

This sequence belongs to the enolase family. It depends on Mg(2+) as a cofactor.

Its subcellular location is the cytoplasm. The protein resides in the secreted. The protein localises to the cell surface. It catalyses the reaction (2R)-2-phosphoglycerate = phosphoenolpyruvate + H2O. Its pathway is carbohydrate degradation; glycolysis; pyruvate from D-glyceraldehyde 3-phosphate: step 4/5. Catalyzes the reversible conversion of 2-phosphoglycerate (2-PG) into phosphoenolpyruvate (PEP). It is essential for the degradation of carbohydrates via glycolysis. This is Enolase from Mycobacterium bovis (strain BCG / Pasteur 1173P2).